We begin with the raw amino-acid sequence, 320 residues long: Ferrochelatase (320 aa).

Residues H194 and E275 each coordinate Fe cation.

This sequence belongs to the ferrochelatase family. Monomer.

It localises to the cytoplasm. It catalyses the reaction heme b + 2 H(+) = protoporphyrin IX + Fe(2+). The protein operates within porphyrin-containing compound metabolism; protoheme biosynthesis; protoheme from protoporphyrin-IX: step 1/1. Catalyzes the ferrous insertion into protoporphyrin IX. In Escherichia coli O139:H28 (strain E24377A / ETEC), this protein is Ferrochelatase.